Here is a 240-residue protein sequence, read N- to C-terminus: Orotidine 5'-phosphate decarboxylase (240 aa).

Residues Asp12, Lys34, 62–71, Thr117, Arg180, Gln189, Gly209, and Arg210 contribute to the substrate site; that span reads DMKLFDIGNT. Catalysis depends on Lys64, which acts as the Proton donor.

This sequence belongs to the OMP decarboxylase family. Type 1 subfamily. As to quaternary structure, homodimer.

The enzyme catalyses orotidine 5'-phosphate + H(+) = UMP + CO2. Its pathway is pyrimidine metabolism; UMP biosynthesis via de novo pathway; UMP from orotate: step 2/2. In terms of biological role, catalyzes the decarboxylation of orotidine 5'-monophosphate (OMP) to uridine 5'-monophosphate (UMP). This chain is Orotidine 5'-phosphate decarboxylase, found in Ruegeria pomeroyi (strain ATCC 700808 / DSM 15171 / DSS-3) (Silicibacter pomeroyi).